A 212-amino-acid chain; its full sequence is 2-C-methyl-D-erythritol 4-phosphate cytidylyltransferase (212 aa).

The protein belongs to the IspD/TarI cytidylyltransferase family. IspD subfamily.

It catalyses the reaction 2-C-methyl-D-erythritol 4-phosphate + CTP + H(+) = 4-CDP-2-C-methyl-D-erythritol + diphosphate. It participates in isoprenoid biosynthesis; isopentenyl diphosphate biosynthesis via DXP pathway; isopentenyl diphosphate from 1-deoxy-D-xylulose 5-phosphate: step 2/6. Functionally, catalyzes the formation of 4-diphosphocytidyl-2-C-methyl-D-erythritol from CTP and 2-C-methyl-D-erythritol 4-phosphate (MEP). The protein is 2-C-methyl-D-erythritol 4-phosphate cytidylyltransferase of Chlamydia felis (strain Fe/C-56) (Chlamydophila felis).